We begin with the raw amino-acid sequence, 410 residues long: Lissencephaly-1 homolog (410 aa).

The region spanning 7-39 (QRDELNRAIADYLRSNGYEEAYSVFKKEAELDM) is the LisH domain. The stretch at 56-82 (TSVIRLQKKVMELESKLNEAKEEFTSG) forms a coiled coil. WD repeat units lie at residues 106 to 147 (GHRS…RTLK), 148 to 189 (GHTD…RTMH), 190 to 229 (GHDH…CVKT), 232 to 271 (GHRE…CKAE), 274 to 333 (EHEH…CLMT), 336 to 377 (GHDN…KTLN), and 379 to 410 (HEHF…WECR).

It belongs to the WD repeat LIS1/nudF family. Can self-associate. Component of the cytosolic PAF-AH (I) heterotetrameric enzyme, which is composed of PAFAH1B1 (beta), PAFAH1B2 (alpha2) and PAFAH1B3 (alpha1) subunits. The catalytic activity of the enzyme resides in the alpha1 (PAFAH1B3) and alpha2 (PAFAH1B2) subunits, whereas the beta subunit (PAFAH1B1) has regulatory activity. Trimer formation is not essential for the catalytic activity. Interacts with dynein, dynactin, nde1 and ndel1.

The protein resides in the cytoplasm. The protein localises to the cytoskeleton. Its subcellular location is the microtubule organizing center. It is found in the centrosome. In terms of biological role, regulatory subunit (beta subunit) of the cytosolic type I platelet-activating factor (PAF) acetylhydrolase (PAF-AH (I)), an enzyme that catalyzes the hydrolyze of the acetyl group at the sn-2 position of PAF and its analogs and participates in PAF inactivation. Regulates the PAF-AH (I) activity in a catalytic dimer composition-dependent manner. Positively regulates the activity of the minus-end directed microtubule motor protein dynein. May enhance dynein-mediated microtubule sliding by targeting dynein to the microtubule plus end. Required for several dynein- and microtubule-dependent processes such as the maintenance of Golgi integrity, the peripheral transport of microtubule fragments and the coupling of the nucleus and centrosome. May be required for proliferation of neuronal precursors and neuronal migration. The protein is Lissencephaly-1 homolog (pafah1b1) of Xenopus laevis (African clawed frog).